The chain runs to 312 residues: Glyoxylate/hydroxypyruvate reductase A (312 aa).

Residue arginine 227 is part of the active site. The active-site Proton donor is histidine 275.

This sequence belongs to the D-isomer specific 2-hydroxyacid dehydrogenase family. GhrA subfamily.

It is found in the cytoplasm. It carries out the reaction glycolate + NADP(+) = glyoxylate + NADPH + H(+). The catalysed reaction is (R)-glycerate + NAD(+) = 3-hydroxypyruvate + NADH + H(+). The enzyme catalyses (R)-glycerate + NADP(+) = 3-hydroxypyruvate + NADPH + H(+). Functionally, catalyzes the NADPH-dependent reduction of glyoxylate and hydroxypyruvate into glycolate and glycerate, respectively. This Escherichia coli (strain UTI89 / UPEC) protein is Glyoxylate/hydroxypyruvate reductase A.